We begin with the raw amino-acid sequence, 149 residues long: Probable calcium-binding protein CML25/26 (149 aa).

EF-hand domains follow at residues 1–35 (MASS…ALGE), 37–72 (VSEE…HQLQ), 77–113 (ESLR…LGSE), and 117–149 (LEME…MLMA). Residues D13, D15, D17, K19, E24, D50, D52, D54, and E61 each contribute to the Ca(2+) site. 4 residues coordinate Ca(2+): D130, N132, D134, and E141.

In terms of biological role, potential calcium sensor. In Oryza sativa subsp. japonica (Rice), this protein is Probable calcium-binding protein CML25/26 (CML25).